Consider the following 452-residue polypeptide: Bifunctional protein GlmU (452 aa).

A pyrophosphorylase region spans residues 1–232; it reads MTARNSLTIV…EDEVRGINTK (232 aa). Residues 11–14, lysine 25, glutamine 78, and 83–84 each bind UDP-N-acetyl-alpha-D-glucosamine; these read LAAG and GT. Mg(2+) is bound at residue aspartate 108. 4 residues coordinate UDP-N-acetyl-alpha-D-glucosamine: glycine 144, glutamate 158, asparagine 173, and asparagine 230. Residue asparagine 230 coordinates Mg(2+). Residues 233–253 form a linker region; sequence AQLAEAETVMQTRLRLAAMAA. The N-acetyltransferase stretch occupies residues 254 to 452; it reads GVTLIAPETV…KSRHRKPKAH (199 aa). Residues arginine 319 and lysine 337 each contribute to the UDP-N-acetyl-alpha-D-glucosamine site. The Proton acceptor role is filled by histidine 349. 2 residues coordinate UDP-N-acetyl-alpha-D-glucosamine: tyrosine 352 and asparagine 363. Residues alanine 366, 372–373, serine 391, serine 409, and arginine 426 each bind acetyl-CoA; that span reads NY.

In the N-terminal section; belongs to the N-acetylglucosamine-1-phosphate uridyltransferase family. It in the C-terminal section; belongs to the transferase hexapeptide repeat family. As to quaternary structure, homotrimer. The cofactor is Mg(2+).

Its subcellular location is the cytoplasm. The catalysed reaction is alpha-D-glucosamine 1-phosphate + acetyl-CoA = N-acetyl-alpha-D-glucosamine 1-phosphate + CoA + H(+). The enzyme catalyses N-acetyl-alpha-D-glucosamine 1-phosphate + UTP + H(+) = UDP-N-acetyl-alpha-D-glucosamine + diphosphate. The protein operates within nucleotide-sugar biosynthesis; UDP-N-acetyl-alpha-D-glucosamine biosynthesis; N-acetyl-alpha-D-glucosamine 1-phosphate from alpha-D-glucosamine 6-phosphate (route II): step 2/2. It functions in the pathway nucleotide-sugar biosynthesis; UDP-N-acetyl-alpha-D-glucosamine biosynthesis; UDP-N-acetyl-alpha-D-glucosamine from N-acetyl-alpha-D-glucosamine 1-phosphate: step 1/1. Its pathway is bacterial outer membrane biogenesis; LPS lipid A biosynthesis. Functionally, catalyzes the last two sequential reactions in the de novo biosynthetic pathway for UDP-N-acetylglucosamine (UDP-GlcNAc). The C-terminal domain catalyzes the transfer of acetyl group from acetyl coenzyme A to glucosamine-1-phosphate (GlcN-1-P) to produce N-acetylglucosamine-1-phosphate (GlcNAc-1-P), which is converted into UDP-GlcNAc by the transfer of uridine 5-monophosphate (from uridine 5-triphosphate), a reaction catalyzed by the N-terminal domain. The chain is Bifunctional protein GlmU from Rhodopseudomonas palustris (strain TIE-1).